The chain runs to 917 residues: Probable dipeptidyl-aminopeptidase B (917 aa).

The interval 1 to 75 (MTVGRRLNDE…KYRDDVEEDW (75 aa)) is disordered. Topologically, residues 1–93 (MTVGRRLNDE…NAKPSQRRTQ (93 aa)) are cytoplasmic. Over residues 27–39 (DSSSTASVSLTLV) the composition is skewed to low complexity. A compositionally biased stretch (polar residues) spans 40-49 (DGTNHTTAKP). Basic and acidic residues predominate over residues 57-69 (VSRDRYADEKYRD). A helical; Signal-anchor for type II membrane protein membrane pass occupies residues 94–114 (IVFWLLVALCVGGWAVAFLFF). Over 115-917 (VTSPGNTIST…KRVIRRLLHR (803 aa)) the chain is Vacuolar. Positions 124 to 133 (TTPDTGSGSP) are enriched in polar residues. A disordered region spans residues 124-150 (TTPDTGSGSPDSDVIKPGSPPAGKKIP). 3 N-linked (GlcNAc...) asparagine glycosylation sites follow: N206, N302, and N354. S759 functions as the Charge relay system in the catalytic mechanism. Residue N818 is glycosylated (N-linked (GlcNAc...) asparagine). Active-site charge relay system residues include D836 and H869.

It belongs to the peptidase S9B family.

Its subcellular location is the vacuole membrane. It catalyses the reaction Release of an N-terminal dipeptide, Xaa-Yaa-|-Zaa-, from a polypeptide, preferentially when Yaa is Pro, provided Zaa is neither Pro nor hydroxyproline.. Type IV dipeptidyl-peptidase which removes N-terminal dipeptides sequentially from polypeptides having unsubstituted N-termini provided that the penultimate residue is proline. This Arthroderma gypseum (strain ATCC MYA-4604 / CBS 118893) (Microsporum gypseum) protein is Probable dipeptidyl-aminopeptidase B (DAPB).